Here is a 532-residue protein sequence, read N- to C-terminus: FAD-dependent monooxygenase hkm7 (532 aa).

Residues 191–193 (RIY) and aspartate 261 each bind FAD.

This sequence belongs to the PheA/TfdB FAD monooxygenase family.

It functions in the pathway secondary metabolite biosynthesis. In terms of biological role, FAD-dependent monooxygenase; part of the gene cluster that mediates the biosynthesis of hancockiamides, an unusual new family of N-cinnamoylated piperazines. The NRPS hkm10 and the NmrA-like reductase hkm9 are proposed to convert two molecules of L-Phe to the intermediary piperazine called xenocockiamide A. Xenocockiamide A is then converted to hancockiamide D via a series of hydroxylations and O-methylations. The tyrosinase hkm6 may catalyze an aromatic hydroxylation, then the 2-oxoglutarate-dependent Fe(II) dioxygenase hkm4 and the FAD-dependent phenol hydroxylase hkm7 may catalyze consecutive hydroxylations to install 2 more hydroxy groups, and the methyltransferase hkm8 probably catalyzes two methylations using 2 molecules of S-adenosyl-L-methionine (SAM). The NRPS hkm11 activates and transfers trans-cinnamate supplied by the PAL hkm12 to hancockiamide D and produces hancockiamide A. NRPS Hkm11 has the flexibility to tolerate the bulky hancockiamide G as a substrate and the absence of the acetyl-transferase hkm3 opens up the opportunity for hkm11 to introduce a second N-cinnamoyl moiety. The cytochrome P450 monooxygenase hkm5 catalyzes the methylenedioxy bridge formation, converting hancockiamide A into hancockiamide G. Hkm5 can also convert hancockiamide B into hancockiamide C, and hancockiamide D into hancockiamide H. The N-acetyltransferase hkm3 finally transfers an acetyl group to 1-N of piperazine, converting hancockiamide A into hancockiamide B and hancockiamide G into hancockiamide C. This chain is FAD-dependent monooxygenase hkm7, found in Aspergillus hancockii.